Reading from the N-terminus, the 344-residue chain is MIVLGIESSCDETGVGVVKLDGEGNLEILADSVASSMQEHARFGGVVPEIASRAHLESMVPVMREALRQAGVDKPDAVAATVGPGLAGALLVGASAAKAYAAAWGVPFYAVNHLGGHVAVANLEGETLPHAVALLVSGGHTQLLEVDAVGLPMKELGSTLDDAAGEAYDKVSRLLGLGYPGGPIIDKLARRGNPEAIAFPRGLMKKSDSRHDFSFSGLKTSVARYVEAAERNGEVISVEDVCASFQEAVCDVLTFKAVRACRDVGAKVLLLGGGVAANSRLRELAQERCDKAGIELRVPRFNLCTDNGVMIAALAAQRIHEGAQESPISVGTDPSLSVETPQVF.

Fe cation is bound by residues His113 and His117. Substrate is bound by residues 135–139, Asp169, Gly182, Asp186, and Asn278; that span reads LVSGG. Asp306 provides a ligand contact to Fe cation. The interval 325 to 344 is disordered; that stretch reads ESPISVGTDPSLSVETPQVF. Polar residues predominate over residues 326-344; it reads SPISVGTDPSLSVETPQVF.

It belongs to the KAE1 / TsaD family. Fe(2+) is required as a cofactor.

It is found in the cytoplasm. The enzyme catalyses L-threonylcarbamoyladenylate + adenosine(37) in tRNA = N(6)-L-threonylcarbamoyladenosine(37) in tRNA + AMP + H(+). Required for the formation of a threonylcarbamoyl group on adenosine at position 37 (t(6)A37) in tRNAs that read codons beginning with adenine. Is involved in the transfer of the threonylcarbamoyl moiety of threonylcarbamoyl-AMP (TC-AMP) to the N6 group of A37, together with TsaE and TsaB. TsaD likely plays a direct catalytic role in this reaction. The protein is tRNA N6-adenosine threonylcarbamoyltransferase of Corynebacterium glutamicum (strain R).